Consider the following 591-residue polypeptide: L-fucose isomerase (591 aa).

Residues Glu337 and Asp361 each act as proton acceptor in the active site. Positions 337, 361, and 528 each coordinate Mn(2+).

It belongs to the L-fucose isomerase family. Homohexamer. The cofactor is Mn(2+).

It is found in the cytoplasm. The catalysed reaction is L-fucose = L-fuculose. The protein operates within carbohydrate degradation; L-fucose degradation; L-lactaldehyde and glycerone phosphate from L-fucose: step 1/3. In terms of biological role, converts the aldose L-fucose into the corresponding ketose L-fuculose. The chain is L-fucose isomerase from Escherichia coli O157:H7 (strain EC4115 / EHEC).